Here is a 54-residue protein sequence, read N- to C-terminus: uncharacterized protein (54 aa).

The segment at 1–38 (MFPNSNGPNKMKALVAPSNSSTTSKTNNNNLPPNGRSS) is disordered. A compositionally biased stretch (low complexity) spans 17–38 (PSNSSTTSKTNNNNLPPNGRSS).

This is an uncharacterized protein from Dictyostelium discoideum (Social amoeba).